We begin with the raw amino-acid sequence, 459 residues long: UNC93-like protein 1 (459 aa).

Residues 1-26 (MNVRDEGKTTAEKHGGGEENKSPENK) form a disordered region. A run of 11 helical transmembrane segments spans residues 38–58 (LMGF…GMGG), 73–93 (AVYT…NVLG), 96–116 (LTLA…LYYN), 122–142 (AFAI…WAGE), 159–179 (IALF…IPFI), 195–215 (YIAF…ILPA), 251–271 (LLIV…FNNV), 287–307 (FYWG…DFSF), 314–334 (GFTG…GGLA), 355–375 (GIEF…DAMY), and 425–445 (LIVN…LVYF).

The protein belongs to the unc-93 family.

The protein localises to the membrane. This chain is UNC93-like protein 1, found in Arabidopsis thaliana (Mouse-ear cress).